Here is a 121-residue protein sequence, read N- to C-terminus: MIQMQTNLDVADNSGARRVQCIKVLGGSHRRYAHIGDIIKVTVKEAIPRGKVKKGDVLTAVVVRTRKGVRRSDGSSIRFDNNAAVLLNANKQPIGTRIFGPVTRELRVNNMKIVSLAPEVL.

It belongs to the universal ribosomal protein uL14 family. In terms of assembly, part of the 50S ribosomal subunit. Forms a cluster with proteins L3 and L19. In the 70S ribosome, L14 and L19 interact and together make contacts with the 16S rRNA in bridges B5 and B8.

Its function is as follows. Binds to 23S rRNA. Forms part of two intersubunit bridges in the 70S ribosome. In Pseudoalteromonas atlantica (strain T6c / ATCC BAA-1087), this protein is Large ribosomal subunit protein uL14.